Consider the following 95-residue polypeptide: Small ubiquitin-related modifier 2 (95 aa).

A Peptide (Met-Gly) (interchain with G-Cter in ubiquitin) cross-link involves residue methionine 1. Glycyl lysine isopeptide (Lys-Gly) (interchain with G-Cter in SUMO2) cross-links involve residues lysine 5 and lysine 7. Lysine 11 is subject to N6-acetyllysine; alternate. Residue lysine 11 forms a Glycyl lysine isopeptide (Lys-Gly) (interchain with G-Cter in SUMO); alternate linkage. Lysine 11 participates in a covalent cross-link: Glycyl lysine isopeptide (Lys-Gly) (interchain with G-Cter in SUMO1); alternate. A Glycyl lysine isopeptide (Lys-Gly) (interchain with G-Cter in SUMO2); alternate cross-link involves residue lysine 11. Lysine 11 is covalently cross-linked (Glycyl lysine isopeptide (Lys-Gly) (interchain with G-Cter in ubiquitin); alternate). The Ubiquitin-like domain maps to 16-95; the sequence is DHINLKVAGQ…VFQQQTGGVY (80 aa). Residue lysine 21 forms a Glycyl lysine isopeptide (Lys-Gly) (interchain with G-Cter in SUMO2) linkage. Residue glycine 93 forms a Glycyl lysine isopeptide (Gly-Lys) (interchain with K-? in acceptor proteins) linkage. The propeptide occupies 94 to 95; the sequence is VY.

This sequence belongs to the ubiquitin family. SUMO subfamily. In terms of assembly, interacts with SAE2 and UBE2I. Interacts with ZNF451. Identified in a complex with ZNF451 and UBE2I/UBC9, where one ZNF451 interacts with one UBE2I/UBC9 and two SUMO2 chains, one bound to the UBE2I/UBC9 active site and the other to another region of the same UBE2I/UBC9 molecule. Covalently attached to a number of proteins. Interacts with PELP1. Interacts with USP25; the interaction sumoylates USP25. Interacts with SIMC1, CASP8AP2, RNF111 and SOBP (via SIM domains). Interacts with MTA1. Interacts with HINT1. Interacts with GCNA (via SIM domains); this interaction allows the GCNA recruitment to DPCs sites. Polymeric chains can be formed through Lys-11 cross-linking. Polymeric SUMO2 chains undergo 'Lys-6'-, 'Lys-11'-, 'Lys-48'- and 'Lys-63'-linked polyubiquitination by RNF4. Post-translationally, cleavage of precursor form by SENP1 or SENP2 is necessary for function. In terms of processing, monoubiquitinated N-terminally by UBE2W, which primes it for RNF4-dependent polyubiquitination by the UBE2V1-UBE2N heterodimer.

The protein localises to the nucleus. The protein resides in the PML body. Ubiquitin-like protein that can be covalently attached to proteins as a monomer or as a lysine-linked polymer. Covalent attachment via an isopeptide bond to its substrates requires prior activation by the E1 complex SAE1-SAE2 and linkage to the E2 enzyme UBE2I, and can be promoted by an E3 ligase such as PIAS1-4, RANBP2 or CBX4. This post-translational modification on lysine residues of proteins plays a crucial role in a number of cellular processes such as nuclear transport, DNA replication and repair, mitosis and signal transduction. Polymeric SUMO2 chains are also susceptible to polyubiquitination which functions as a signal for proteasomal degradation of modified proteins. Plays a role in the regulation of sumoylation status of SETX. This Bos taurus (Bovine) protein is Small ubiquitin-related modifier 2.